The following is a 345-amino-acid chain: Flotillin-like protein FloA 1 (345 aa).

Residues 26 to 46 form a helical membrane-spanning segment; the sequence is LLLLVGVFLALFFAAVLGFFF.

This sequence belongs to the flotillin-like FloA family. Homooligomerizes.

It localises to the cell membrane. The protein resides in the membrane raft. Found in functional membrane microdomains (FMM) that may be equivalent to eukaryotic membrane rafts. FMMs are highly dynamic and increase in number as cells age. Flotillins are thought to be important factors in membrane fluidity. The protein is Flotillin-like protein FloA 1 of Rhodopirellula baltica (strain DSM 10527 / NCIMB 13988 / SH1).